The chain runs to 223 residues: N-terminal Xaa-Pro-Lys N-methyltransferase 1-B (223 aa).

S-adenosyl-L-methionine is bound by residues G69, R74, 91 to 93 (DVT), 119 to 120 (LQ), and Q135.

It belongs to the methyltransferase superfamily. NTM1 family.

Its subcellular location is the nucleus. It carries out the reaction N-terminal L-alanyl-L-prolyl-L-lysyl-[protein] + 3 S-adenosyl-L-methionine = N-terminal N,N,N-trimethyl-L-alanyl-L-prolyl-L-lysyl-[protein] + 3 S-adenosyl-L-homocysteine + 3 H(+). It catalyses the reaction N-terminal L-seryl-L-prolyl-L-lysyl-[protein] + 3 S-adenosyl-L-methionine = N-terminal N,N,N-trimethyl-L-seryl-L-prolyl-L-lysyl-[protein] + 3 S-adenosyl-L-homocysteine + 3 H(+). The catalysed reaction is N-terminal L-prolyl-L-prolyl-L-lysyl-[protein] + 2 S-adenosyl-L-methionine = N-terminal N,N-dimethyl-L-prolyl-L-prolyl-L-lysyl-[protein] + 2 S-adenosyl-L-homocysteine + 2 H(+). Distributive alpha-N-methyltransferase that methylates the N-terminus of target proteins containing the N-terminal motif [Ala/Gly/Pro/Ser]-Pro-Lys when the initiator Met is cleaved. Specifically catalyzes mono-, di- or tri-methylation of the exposed alpha-amino group of the Ala, Gly or Ser residue in the [Ala/Gly/Ser]-Pro-Lys motif and mono- or di-methylation of Pro in the Pro-Pro-Lys motif. Required during mitosis for normal bipolar spindle formation and chromosome segregation via its action on target proteins. This is N-terminal Xaa-Pro-Lys N-methyltransferase 1-B (ntmt1-b) from Xenopus laevis (African clawed frog).